Consider the following 494-residue polypeptide: Glycosyl hydrolase family 109 protein (494 aa).

Residues methionine 1–arginine 32 are disordered. Residues methionine 1–alanine 58 constitute a signal peptide (tat-type signal). NAD(+) contacts are provided by residues asparagine 104–arginine 105, aspartate 126, tryptophan 175–histidine 178, glutamate 195–cysteine 196, and asparagine 224. Substrate is bound by residues tyrosine 253, arginine 272, tyrosine 284–histidine 287, and tyrosine 366. Tyrosine 284 provides a ligand contact to NAD(+).

It belongs to the Gfo/Idh/MocA family. Glycosyl hydrolase 109 subfamily. NAD(+) serves as cofactor. Predicted to be exported by the Tat system. The position of the signal peptide cleavage has not been experimentally proven.

In terms of biological role, glycosidase. The sequence is that of Glycosyl hydrolase family 109 protein from Streptomyces filamentosus (Streptomyces roseosporus).